Consider the following 119-residue polypeptide: Putative F-box protein At2g39415 (119 aa).

The 56-residue stretch at 37–92 (IDSISSLPDVILQQILSSLPTNLAIRTSVLSTRWRHVWSDTPYIYFDGPGTLYRGL) folds into the F-box domain.

The protein is Putative F-box protein At2g39415 of Arabidopsis thaliana (Mouse-ear cress).